A 217-amino-acid chain; its full sequence is Large ribosomal subunit protein uL1 (217 aa).

The protein belongs to the universal ribosomal protein uL1 family.

The protein is Large ribosomal subunit protein uL1 (RpL10Ab) of Drosophila melanogaster (Fruit fly).